Consider the following 422-residue polypeptide: GTPase Obg (422 aa).

Residues 1 to 158 (MFYDRAKIYV…LWLELELKVI (158 aa)) enclose the Obg domain. Positions 159–330 (ADVGLIGFPN…VIHRVAELLA (172 aa)) constitute an OBG-type G domain. Residues 165–172 (GFPNAGKS), 190–194 (FTTLV), 212–215 (DIPG), 282–285 (NKMD), and 311–313 (SAA) each bind GTP. Residues serine 172 and threonine 192 each coordinate Mg(2+). The OCT domain occupies 344 to 422 (VMFEPEERFN…IGDWEFEWSE (79 aa)).

It belongs to the TRAFAC class OBG-HflX-like GTPase superfamily. OBG GTPase family. Monomer. The cofactor is Mg(2+).

The protein localises to the cytoplasm. Functionally, an essential GTPase which binds GTP, GDP and possibly (p)ppGpp with moderate affinity, with high nucleotide exchange rates and a fairly low GTP hydrolysis rate. Plays a role in control of the cell cycle, stress response, ribosome biogenesis and in those bacteria that undergo differentiation, in morphogenesis control. This is GTPase Obg from Desulforamulus reducens (strain ATCC BAA-1160 / DSM 100696 / MI-1) (Desulfotomaculum reducens).